A 307-amino-acid chain; its full sequence is Protein FAM76A (307 aa).

Disordered stretches follow at residues 161 to 181 (SRLSSGSHYNSQKTLSTSSIQ) and 287 to 307 (KQAAALSKGKKPEKSGAITSP). Residues 217 to 297 (IIAQLKEEVA…QAAALSKGKK (81 aa)) are a coiled coil.

It belongs to the FAM76 family.

This is Protein FAM76A (FAM76A) from Gallus gallus (Chicken).